The chain runs to 299 residues: Nucleotide-binding protein RER_30260 (299 aa).

An ATP-binding site is contributed by 19–26 (GLSGAGLS). 70-73 (DVRS) contributes to the GTP binding site.

This sequence belongs to the RapZ-like family.

Functionally, displays ATPase and GTPase activities. This is Nucleotide-binding protein RER_30260 from Rhodococcus erythropolis (strain PR4 / NBRC 100887).